A 158-amino-acid polypeptide reads, in one-letter code: Transcription elongation factor GreA (158 aa).

A coiled-coil region spans residues 10 to 76 (TLEGKKKLEE…QIEKMIRNAE (67 aa)).

This sequence belongs to the GreA/GreB family.

In terms of biological role, necessary for efficient RNA polymerase transcription elongation past template-encoded arresting sites. The arresting sites in DNA have the property of trapping a certain fraction of elongating RNA polymerases that pass through, resulting in locked ternary complexes. Cleavage of the nascent transcript by cleavage factors such as GreA or GreB allows the resumption of elongation from the new 3'terminus. GreA releases sequences of 2 to 3 nucleotides. The protein is Transcription elongation factor GreA of Halalkalibacterium halodurans (strain ATCC BAA-125 / DSM 18197 / FERM 7344 / JCM 9153 / C-125) (Bacillus halodurans).